Reading from the N-terminus, the 433-residue chain is Glutamyl-tRNA reductase (433 aa).

Substrate is bound by residues Thr49–Arg52, Ser109, Glu114–Gln116, and Gln120. Catalysis depends on Cys50, which acts as the Nucleophile. Gly198–Ser203 provides a ligand contact to NADP(+).

This sequence belongs to the glutamyl-tRNA reductase family. As to quaternary structure, homodimer.

It carries out the reaction (S)-4-amino-5-oxopentanoate + tRNA(Glu) + NADP(+) = L-glutamyl-tRNA(Glu) + NADPH + H(+). The protein operates within porphyrin-containing compound metabolism; protoporphyrin-IX biosynthesis; 5-aminolevulinate from L-glutamyl-tRNA(Glu): step 1/2. Its pathway is porphyrin-containing compound metabolism; chlorophyll biosynthesis. Its function is as follows. Catalyzes the NADPH-dependent reduction of glutamyl-tRNA(Glu) to glutamate 1-semialdehyde (GSA). In Prochlorococcus marinus subsp. pastoris (strain CCMP1986 / NIES-2087 / MED4), this protein is Glutamyl-tRNA reductase.